We begin with the raw amino-acid sequence, 305 residues long: Dermonecrotic toxin LiSicTox-alphaII1 (305 aa).

The first 18 residues, 1-18 (MLLHIALILGCWSVFSEG), serve as a signal peptide directing secretion. A propeptide spanning residues 19-26 (AETDVAER) is cleaved from the precursor. The active site involves His-38. Residues Glu-58 and Asp-60 each coordinate Mg(2+). Catalysis depends on His-74, which acts as the Nucleophile. Disulfide bonds link Cys-78/Cys-84 and Cys-80/Cys-223. Asp-118 provides a ligand contact to Mg(2+).

It belongs to the arthropod phospholipase D family. Class II subfamily. Class IIa sub-subfamily. Mg(2+) is required as a cofactor. In terms of tissue distribution, expressed by the venom gland.

It localises to the secreted. It carries out the reaction an N-(acyl)-sphingosylphosphocholine = an N-(acyl)-sphingosyl-1,3-cyclic phosphate + choline. The enzyme catalyses an N-(acyl)-sphingosylphosphoethanolamine = an N-(acyl)-sphingosyl-1,3-cyclic phosphate + ethanolamine. It catalyses the reaction a 1-acyl-sn-glycero-3-phosphocholine = a 1-acyl-sn-glycero-2,3-cyclic phosphate + choline. The catalysed reaction is a 1-acyl-sn-glycero-3-phosphoethanolamine = a 1-acyl-sn-glycero-2,3-cyclic phosphate + ethanolamine. In terms of biological role, dermonecrotic toxins cleave the phosphodiester linkage between the phosphate and headgroup of certain phospholipids (sphingolipid and lysolipid substrates), forming an alcohol (often choline) and a cyclic phosphate. This toxin acts on sphingomyelin (SM) wih high activity. It may also act on ceramide phosphoethanolamine (CPE), lysophosphatidylcholine (LPC) and lysophosphatidylethanolamine (LPE), but not on lysophosphatidylserine (LPS), and lysophosphatidylglycerol (LPG). It acts by transphosphatidylation, releasing exclusively cyclic phosphate products as second products. Shows high hemolytic activity. Causes dermonecrosis, induces inflammatory response, platelet aggregation and increases vessel permeability. Shows no lethality when injected at higher dose into mice. May cause complement-dependent hemolysis as well as in a complement-independent manner. The hemolysis provoked in a complement-independent manner may be composed of several steps. The toxin may bind to erythrocyte membranes, may hydrolyze membrane phospholipids (SM and LPC) thus generating metabolism products that may cause hemolysis, probably by provoking an increase of calcium inside cells. The calcium influx may be due to the opening of L-type calcium channels, since L-type calcium channel blockers inhibit calcium influx. The polypeptide is Dermonecrotic toxin LiSicTox-alphaII1 (Loxosceles intermedia (Brown spider)).